We begin with the raw amino-acid sequence, 505 residues long: Catalase (505 aa).

Residues His-56 and Asn-129 contribute to the active site. Tyr-339 is a heme binding site.

It belongs to the catalase family. Requires heme as cofactor.

The protein resides in the cytoplasm. It catalyses the reaction 2 H2O2 = O2 + 2 H2O. Decomposes hydrogen peroxide into water and oxygen; serves to protect cells from the toxic effects of hydrogen peroxide. The chain is Catalase (katA) from Helicobacter pylori (strain ATCC 700392 / 26695) (Campylobacter pylori).